A 160-amino-acid polypeptide reads, in one-letter code: MSRRRRASKRVISPDSKYNSVLLARFINVIMRSGERSIAEKIVYGALNKAEARLGEGAMSIFNAALNNVMPQMEVRSRRIGGVTYQVPVEVKEDRAVSLALRWIFKAAAAARKRSNKMYMDCLCNELLEAYNKRGGAYKMREEKYKMAEANKAFSHFRFN.

Belongs to the universal ribosomal protein uS7 family. In terms of assembly, part of the 30S ribosomal subunit. Contacts proteins S9 and S11.

Its function is as follows. One of the primary rRNA binding proteins, it binds directly to 16S rRNA where it nucleates assembly of the head domain of the 30S subunit. Is located at the subunit interface close to the decoding center, probably blocks exit of the E-site tRNA. The polypeptide is Small ribosomal subunit protein uS7 (Ehrlichia canis (strain Jake)).